The sequence spans 1004 residues: Retrovirus-related Pol polyprotein from type-1 retrotransposable element R1 (1004 aa).

Residues 450–717 (QCLLESYFPQ…SEVKHLGIFV (268 aa)) form the Reverse transcriptase domain. The segment at 853–1004 (LSGSQFKELL…RLMRGMRIRE (152 aa)) is nucleic acid-binding endonuclease.

It carries out the reaction DNA(n) + a 2'-deoxyribonucleoside 5'-triphosphate = DNA(n+1) + diphosphate. The sequence is that of Retrovirus-related Pol polyprotein from type-1 retrotransposable element R1 from Bradysia coprophila (Dark-winged fungus gnat).